The chain runs to 177 residues: ATP-dependent protease subunit HslV (177 aa).

The active site involves threonine 6. Residues serine 162, cysteine 165, and threonine 168 each contribute to the Na(+) site.

Belongs to the peptidase T1B family. HslV subfamily. In terms of assembly, a double ring-shaped homohexamer of HslV is capped on each side by a ring-shaped HslU homohexamer. The assembly of the HslU/HslV complex is dependent on binding of ATP.

Its subcellular location is the cytoplasm. The catalysed reaction is ATP-dependent cleavage of peptide bonds with broad specificity.. Its activity is regulated as follows. Allosterically activated by HslU binding. Functionally, protease subunit of a proteasome-like degradation complex believed to be a general protein degrading machinery. The polypeptide is ATP-dependent protease subunit HslV (Desulforudis audaxviator (strain MP104C)).